A 418-amino-acid polypeptide reads, in one-letter code: MAP kinase-interacting serine/threonine-protein kinase 1 (418 aa).

Residues 1 to 23 form a disordered region; it reads MVSSQPVPFDDGGKRRKKKRKTR. Residues 37-321 form the Protein kinase domain; it reads RLTDELLGEG…AFQVLQHPWL (285 aa). ATP contacts are provided by residues 43–51 and Lys66; that span reads LGEGAYAKV. Asp158 (proton acceptor) is an active-site residue. The interval 384 to 418 is disordered; the sequence is PPSKSRLAKRRAQAHARKGGSHPTHSTVTASQGTP. Residues 389 to 403 show a composition bias toward basic residues; that stretch reads RLAKRRAQAHARKGG. Residues 406–418 show a composition bias toward polar residues; the sequence is PTHSTVTASQGTP.

It belongs to the protein kinase superfamily. CAMK Ser/Thr protein kinase family. Mg(2+) is required as a cofactor.

The catalysed reaction is L-seryl-[protein] + ATP = O-phospho-L-seryl-[protein] + ADP + H(+). It carries out the reaction L-threonyl-[protein] + ATP = O-phospho-L-threonyl-[protein] + ADP + H(+). May play a role in the response to environmental stress and cytokines. Appears to regulate translation by phosphorylating EIF4E, thus increasing the affinity of this protein for the 7-methylguanosine-containing mRNA cap. The polypeptide is MAP kinase-interacting serine/threonine-protein kinase 1 (mknk1) (Xenopus laevis (African clawed frog)).